A 313-amino-acid polypeptide reads, in one-letter code: GDP-D-glycero-alpha-D-manno-heptose dehydrogenase (313 aa).

Residues 13-14 (YI), 33-39 (DNLMFDQ), phenylalanine 37, 57-58 (DA), leucine 77, and 144-148 (YGIDK) contribute to the NADH site. Threonine 168 contributes to the GDP binding site. Residues valine 169 and 175-177 (RMR) each bind NADH. Residues 179–184 (DLLVND), 196–198 (VLF), arginine 204, lysine 242, and arginine 270 each bind GDP. Asparagine 311 provides a ligand contact to NADH.

Homotetramer. NAD(+) serves as cofactor.

It carries out the reaction GDP-D-glycero-alpha-D-manno-heptose + 2-oxoglutarate = GDP-D-glycero-4-keto-alpha-D-lyxo-heptose + (S)-2-hydroxyglutarate. The protein operates within capsule biogenesis; capsule polysaccharide biosynthesis. Functionally, NAD-dependent dehydrogenase involved in the biosynthesis of heptose moieties with a hydroxyl group at C6 found on the capsular polysaccharide (CPS) of C.jejuni. Catalyzes the initial oxidation of C4 of the GDP-D-glycero-alpha-D-manno-heptose to form GDP-D-glycero-4-keto-alpha-D-lyxo-heptose in the presence of alpha-ketoglutarate required to recycle the NADH nucleotide. This is GDP-D-glycero-alpha-D-manno-heptose dehydrogenase from Campylobacter jejuni subsp. jejuni serotype O:2 (strain ATCC 700819 / NCTC 11168).